A 376-amino-acid chain; its full sequence is Chaperone protein DnaJ (376 aa).

The J domain occupies 5 to 70; the sequence is DYYEVLGVAK…QKRAAYDQYG (66 aa). Residues 136-214 form a CR-type zinc finger; sequence GYDTQIRVPS…CHGSGKVKET (79 aa). Residues Cys-149, Cys-152, Cys-166, Cys-169, Cys-188, Cys-191, Cys-202, and Cys-205 each contribute to the Zn(2+) site. 4 CXXCXGXG motif repeats span residues 149–156, 166–173, 188–195, and 202–209; these read CEVCHGSG, CPTCHGQG, CPKCHGTG, and CAHCHGSG.

This sequence belongs to the DnaJ family. In terms of assembly, homodimer. Requires Zn(2+) as cofactor.

Its subcellular location is the cytoplasm. In terms of biological role, participates actively in the response to hyperosmotic and heat shock by preventing the aggregation of stress-denatured proteins and by disaggregating proteins, also in an autonomous, DnaK-independent fashion. Unfolded proteins bind initially to DnaJ; upon interaction with the DnaJ-bound protein, DnaK hydrolyzes its bound ATP, resulting in the formation of a stable complex. GrpE releases ADP from DnaK; ATP binding to DnaK triggers the release of the substrate protein, thus completing the reaction cycle. Several rounds of ATP-dependent interactions between DnaJ, DnaK and GrpE are required for fully efficient folding. Also involved, together with DnaK and GrpE, in the DNA replication of plasmids through activation of initiation proteins. The protein is Chaperone protein DnaJ of Burkholderia multivorans (strain ATCC 17616 / 249).